The sequence spans 583 residues: Exonuclease 3'-5' domain-containing protein 2 (583 aa).

Topologically, residues 1 to 11 are mitochondrial intermembrane; the sequence is MTRESAVATKR. A helical membrane pass occupies residues 12 to 29; that stretch reads NWAILAAGVGLVYVLVRH. Over 30–583 the chain is Cytoplasmic; that stretch reads RHRLLCPLRR…AGLDAKIKET (554 aa). The 3'-5' exonuclease domain maps to 62–228; that stretch reads TTQWVLNELK…AIYQKLCRDL (167 aa). 3 residues coordinate a divalent metal cation: Asp83, Glu85, and Asp213. Positions 266–281 are enriched in polar residues; the sequence is GSGVTRSKGSTQSKSN. The disordered stretch occupies residues 266-286; the sequence is GSGVTRSKGSTQSKSNKWVPK.

Belongs to the EXD2 family. As to quaternary structure, homodimer. Requires Mg(2+) as cofactor. Mn(2+) serves as cofactor.

It is found in the mitochondrion membrane. Functionally, 3'-5' exoribonuclease required for mitochondrial metabolism. In Drosophila melanogaster (Fruit fly), this protein is Exonuclease 3'-5' domain-containing protein 2.